Consider the following 204-residue polypeptide: Threonylcarbamoyl-AMP synthase (204 aa).

Positions 10–204 (ADELDLVANY…KDLLAGHILR (195 aa)) constitute a YrdC-like domain.

The protein belongs to the SUA5 family. TsaC subfamily.

The protein resides in the cytoplasm. The catalysed reaction is L-threonine + hydrogencarbonate + ATP = L-threonylcarbamoyladenylate + diphosphate + H2O. In terms of biological role, required for the formation of a threonylcarbamoyl group on adenosine at position 37 (t(6)A37) in tRNAs that read codons beginning with adenine. Catalyzes the conversion of L-threonine, HCO(3)(-)/CO(2) and ATP to give threonylcarbamoyl-AMP (TC-AMP) as the acyladenylate intermediate, with the release of diphosphate. This is Threonylcarbamoyl-AMP synthase from Moraxella catarrhalis (strain BBH18).